Here is a 79-residue protein sequence, read N- to C-terminus: Small ribosomal subunit protein bS18 (79 aa).

Belongs to the bacterial ribosomal protein bS18 family. As to quaternary structure, part of the 30S ribosomal subunit. Forms a tight heterodimer with protein bS6.

Binds as a heterodimer with protein bS6 to the central domain of the 16S rRNA, where it helps stabilize the platform of the 30S subunit. The protein is Small ribosomal subunit protein bS18 of Bradyrhizobium diazoefficiens (strain JCM 10833 / BCRC 13528 / IAM 13628 / NBRC 14792 / USDA 110).